The chain runs to 101 residues: Small ribosomal subunit protein uS14 (101 aa).

The segment covering methionine 1 to asparagine 10 has biased composition (basic and acidic residues). A disordered region spans residues methionine 1–lysine 23. A compositionally biased stretch (basic residues) spans asparagine 11–lysine 23.

Belongs to the universal ribosomal protein uS14 family. Part of the 30S ribosomal subunit. Contacts proteins S3 and S10.

Binds 16S rRNA, required for the assembly of 30S particles and may also be responsible for determining the conformation of the 16S rRNA at the A site. In Bradyrhizobium sp. (strain BTAi1 / ATCC BAA-1182), this protein is Small ribosomal subunit protein uS14.